Consider the following 623-residue polypeptide: Membrane protein insertase YidC (623 aa).

Residues 8-28 (LILATGLSFLVIMVWFFLFPP) traverse the membrane as a helical segment. The disordered stretch occupies residues 33–64 (TEGEPTVATQQTAVAPSATPDAPTTAVPPDAD). Positions 44-62 (TAVAPSATPDAPTTAVPPD) are enriched in low complexity. Transmembrane regions (helical) follow at residues 379-399 (MGLA…PLAY), 449-469 (LPIL…FVTI), 507-527 (TTMA…SMWL), and 543-563 (IFAW…SGLV). Residues 601 to 617 (KPAAQPAGKAANDGAAP) show a composition bias toward low complexity. A disordered region spans residues 601–623 (KPAAQPAGKAANDGAAPAKKRKP).

This sequence belongs to the OXA1/ALB3/YidC family. Type 1 subfamily. In terms of assembly, interacts with the Sec translocase complex via SecD. Specifically interacts with transmembrane segments of nascent integral membrane proteins during membrane integration.

The protein resides in the cell inner membrane. Functionally, required for the insertion and/or proper folding and/or complex formation of integral membrane proteins into the membrane. Involved in integration of membrane proteins that insert both dependently and independently of the Sec translocase complex, as well as at least some lipoproteins. Aids folding of multispanning membrane proteins. The protein is Membrane protein insertase YidC of Cereibacter sphaeroides (strain KD131 / KCTC 12085) (Rhodobacter sphaeroides).